The primary structure comprises 168 residues: Group IIF secretory phospholipase A2 (168 aa).

The first 20 residues, 1 to 20, serve as a signal peptide directing secretion; it reads MKKFFTVAILAGSVLSTAHG. Intrachain disulfides connect C46–C138, C48–C64, C63–C120, C69–C145, C70–C113, C79–C106, and C98–C111. Ca(2+) is bound by residues Y47, G49, and G51. H67 is a catalytic residue. D68 contributes to the Ca(2+) binding site. N-linked (GlcNAc...) asparagine glycans are attached at residues N92 and N102. The active site involves D114. 2 N-linked (GlcNAc...) asparagine glycosylation sites follow: N123 and N144. Residues 139–168 are required for localization on the plasma membrane; the sequence is QGPTPNCSIYEPPPEEVTCSHQSPAPPAPP.

Belongs to the phospholipase A2 family. It depends on Ca(2+) as a cofactor. As to expression, expressed at high levels in placenta, testis, thymus and at lower levels in heart, kidney, liver and prostate. Highly expressed in rheumatoid arthritic tissues, including synovial lining cells in the intima, capillary endothelial cells and plasma cells.

It is found in the secreted. The protein localises to the cell membrane. It catalyses the reaction a 1,2-diacyl-sn-glycero-3-phosphocholine + H2O = a 1-acyl-sn-glycero-3-phosphocholine + a fatty acid + H(+). The catalysed reaction is 1-hexadecanoyl-2-(9Z-octadecenoyl)-sn-glycero-3-phospho-(1'-sn-glycerol) + H2O = 1-hexadecanoyl-sn-glycero-3-phospho-(1'-sn-glycerol) + (9Z)-octadecenoate + H(+). It carries out the reaction 1-hexadecanoyl-2-(9Z,12Z-octadecadienoyl)-sn-glycero-3-phosphoethanolamine + H2O = 1-hexadecanoyl-sn-glycero-3-phosphoethanolamine + (9Z,12Z)-octadecadienoate + H(+). The enzyme catalyses 1-hexadecanoyl-2-(5Z,8Z,11Z,14Z-eicosatetraenoyl)-sn-glycero-3-phosphoethanolamine + H2O = 1-hexadecanoyl-sn-glycero-3-phosphoethanolamine + (5Z,8Z,11Z,14Z)-eicosatetraenoate + H(+). It catalyses the reaction 1-hexadecanoyl-2-(9Z-octadecenoyl)-sn-glycero-3-phosphocholine + H2O = 1-hexadecanoyl-sn-glycero-3-phosphocholine + (9Z)-octadecenoate + H(+). The catalysed reaction is 1-hexadecanoyl-2-(9Z-octadecenoyl)-sn-glycero-3-phospho-L-serine + H2O = 1-hexadecanoyl-sn-glycero-3-phospho-L-serine + (9Z)-octadecenoate + H(+). In terms of biological role, secretory calcium-dependent phospholipase A2 that primarily targets extracellular phospholipids. Hydrolyzes the ester bond of the fatty acyl group attached at the sn-2 position of phospholipids (phospholipase A2 activity), the catalytic efficiency decreasing in the following order: phosphatidylglycerols &gt; phosphatidylethanolamines &gt; phosphatidylcholines &gt; phosphatidylserines. May play a role in lipid mediator production in inflammatory conditions, by providing arachidonic acid to downstream cyclooxygenases and lipoxygenases. The chain is Group IIF secretory phospholipase A2 (PLA2G2F) from Homo sapiens (Human).